The primary structure comprises 387 residues: Polyphosphate kinase (387 aa).

Residues R347 and R377 each contribute to the Mg(2+) site.

It belongs to the polyphosphate kinase 1 (PPK1) family. It depends on Mg(2+) as a cofactor. In terms of processing, an intermediate of this reaction is the autophosphorylated ppk in which a phosphate is covalently linked to a histidine residue through a N-P bond.

The enzyme catalyses [phosphate](n) + ATP = [phosphate](n+1) + ADP. In terms of biological role, catalyzes the reversible transfer of the terminal phosphate of ATP to form a long-chain polyphosphate (polyP). This chain is Polyphosphate kinase (ppk), found in Aphanizomenon baltica.